Here is a 226-residue protein sequence, read N- to C-terminus: Probable transcriptional regulatory protein y4xI (226 aa).

The 114-residue stretch at 1 to 114 (MRTLLVDTDL…ELIARMRALL (114 aa)) folds into the Response regulatory domain. The ompR/PhoB-type DNA-binding region spans 122-220 (CPIIEFGNLH…VRGIGYTLEL (99 aa)).

The protein resides in the cytoplasm. This is Probable transcriptional regulatory protein y4xI from Sinorhizobium fredii (strain NBRC 101917 / NGR234).